Here is a 414-residue protein sequence, read N- to C-terminus: MLVIEDVRAYEVLDSRGNPTVKAEVTLSDGSVGAAIVPSGASTGSKEALELRDNDERFGGKGVLKAVANVNETIADEILGLDAFNQTQLDDTLRELDGTNNYSNLGANATLGVSMATARAAAAALGMPLYRYLGGANASILPVPMCNIINGGAHANNNVDFQEFMIMPFGFTSFKEALRSVCEIYAILKKELANSGHSTALGDEGGFAPNLANNTEPIDLLMTCIKKAGYENRVKIALDVASTEFFKDGKYHMEGKAFSSEDLIERYVELCAKYPICSIEDGLAENDFEGWIKLTEKLGNKIQLVGDDLFVTNEDILREGIIKKMANAVLIKPNQIGTITQTMRTVRLAQRNNYKCVMSHRSGESEDAFIADFAVALNTGQIKTGALARGERTAKYNRLLEIELESDEYLGEKL.

Glutamine 162 contacts (2R)-2-phosphoglycerate. Glutamate 204 acts as the Proton donor in catalysis. 3 residues coordinate Mg(2+): aspartate 239, glutamate 280, and aspartate 307. (2R)-2-phosphoglycerate is bound by residues lysine 332, arginine 361, serine 362, and lysine 383. Lysine 332 functions as the Proton acceptor in the catalytic mechanism.

The protein belongs to the enolase family. The cofactor is Mg(2+).

It localises to the cytoplasm. It is found in the secreted. Its subcellular location is the cell surface. The enzyme catalyses (2R)-2-phosphoglycerate = phosphoenolpyruvate + H2O. Its pathway is carbohydrate degradation; glycolysis; pyruvate from D-glyceraldehyde 3-phosphate: step 4/5. Functionally, catalyzes the reversible conversion of 2-phosphoglycerate (2-PG) into phosphoenolpyruvate (PEP). It is essential for the degradation of carbohydrates via glycolysis. This is Enolase from Campylobacter jejuni subsp. jejuni serotype O:6 (strain 81116 / NCTC 11828).